The primary structure comprises 791 residues: Phenylalanine--tRNA ligase beta subunit (791 aa).

Positions 39–148 constitute a tRNA-binding domain; sequence AADFSGVVVA…ADAPVGADIR (110 aa). The B5 domain occupies 401-476; it reads PLRAPVRLRE…RVYGYDAIPR (76 aa). Residues D454, D460, E463, and E464 each contribute to the Mg(2+) site. In terms of domain architecture, FDX-ACB spans 697-790; it reads SRFPLVRRDL…LAADFGAKLR (94 aa).

Belongs to the phenylalanyl-tRNA synthetase beta subunit family. Type 1 subfamily. Tetramer of two alpha and two beta subunits. Mg(2+) serves as cofactor.

The protein localises to the cytoplasm. The enzyme catalyses tRNA(Phe) + L-phenylalanine + ATP = L-phenylalanyl-tRNA(Phe) + AMP + diphosphate + H(+). This Methylococcus capsulatus (strain ATCC 33009 / NCIMB 11132 / Bath) protein is Phenylalanine--tRNA ligase beta subunit.